The sequence spans 286 residues: ATP synthase gamma chain (286 aa).

It belongs to the ATPase gamma chain family. F-type ATPases have 2 components, CF(1) - the catalytic core - and CF(0) - the membrane proton channel. CF(1) has five subunits: alpha(3), beta(3), gamma(1), delta(1), epsilon(1). CF(0) has three main subunits: a, b and c.

It is found in the cell inner membrane. In terms of biological role, produces ATP from ADP in the presence of a proton gradient across the membrane. The gamma chain is believed to be important in regulating ATPase activity and the flow of protons through the CF(0) complex. The chain is ATP synthase gamma chain from Fuscovulum blasticum (Rhodobacter blasticus).